We begin with the raw amino-acid sequence, 281 residues long: Streptomycin biosynthesis protein StrF (281 aa).

Its pathway is antibiotic biosynthesis; streptomycin biosynthesis. Its function is as follows. May be involved in the formation of N-methyl-L-glucosamine. The sequence is that of Streptomycin biosynthesis protein StrF (strF) from Streptomyces griseus.